A 446-amino-acid polypeptide reads, in one-letter code: Chromosomal replication initiator protein DnaA (446 aa).

The domain I, interacts with DnaA modulators stretch occupies residues 1 to 92 (MENISDLWNS…SQAEEEIDLP (92 aa)). The segment at 87–107 (EEIDLPPSKPNSAQDDSNHLP) is disordered. The segment at 93 to 109 (PSKPNSAQDDSNHLPQS) is domain II. The span at 96 to 107 (PNSAQDDSNHLP) shows a compositional bias: polar residues. Residues 110-326 (MLNPKYTFDT…GALIRVVAYS (217 aa)) form a domain III, AAA+ region region. Positions 154, 156, 157, and 158 each coordinate ATP. A domain IV, binds dsDNA region spans residues 327–446 (SLINKDINAD…QVEEINDILK (120 aa)).

It belongs to the DnaA family. Oligomerizes as a right-handed, spiral filament on DNA at oriC.

It localises to the cytoplasm. In terms of biological role, plays an essential role in the initiation and regulation of chromosomal replication. ATP-DnaA binds to the origin of replication (oriC) to initiate formation of the DNA replication initiation complex once per cell cycle. Binds the DnaA box (a 9 base pair repeat at the origin) and separates the double-stranded (ds)DNA. Forms a right-handed helical filament on oriC DNA; dsDNA binds to the exterior of the filament while single-stranded (ss)DNA is stabiized in the filament's interior. The ATP-DnaA-oriC complex binds and stabilizes one strand of the AT-rich DNA unwinding element (DUE), permitting loading of DNA polymerase. After initiation quickly degrades to an ADP-DnaA complex that is not apt for DNA replication. Binds acidic phospholipids. The protein is Chromosomal replication initiator protein DnaA of Bacillus cereus (strain ATCC 10987 / NRS 248).